The sequence spans 105 residues: Integration host factor subunit beta (105 aa).

The protein belongs to the bacterial histone-like protein family. As to quaternary structure, heterodimer of an alpha and a beta chain.

Its function is as follows. This protein is one of the two subunits of integration host factor, a specific DNA-binding protein that functions in genetic recombination as well as in transcriptional and translational control. This is Integration host factor subunit beta from Nitrosomonas europaea (strain ATCC 19718 / CIP 103999 / KCTC 2705 / NBRC 14298).